We begin with the raw amino-acid sequence, 334 residues long: tRNA N6-adenosine threonylcarbamoyltransferase (334 aa).

The Fe cation site is built by His-111 and His-115. Substrate contacts are provided by residues Ile-134–Gly-138, Asp-167, Gly-180, Asp-184, and Asn-272. A Fe cation-binding site is contributed by Asp-300.

This sequence belongs to the KAE1 / TsaD family. Fe(2+) is required as a cofactor.

Its subcellular location is the cytoplasm. It catalyses the reaction L-threonylcarbamoyladenylate + adenosine(37) in tRNA = N(6)-L-threonylcarbamoyladenosine(37) in tRNA + AMP + H(+). Functionally, required for the formation of a threonylcarbamoyl group on adenosine at position 37 (t(6)A37) in tRNAs that read codons beginning with adenine. Is involved in the transfer of the threonylcarbamoyl moiety of threonylcarbamoyl-AMP (TC-AMP) to the N6 group of A37, together with TsaE and TsaB. TsaD likely plays a direct catalytic role in this reaction. This is tRNA N6-adenosine threonylcarbamoyltransferase from Dictyoglomus turgidum (strain DSM 6724 / Z-1310).